The sequence spans 309 residues: Porphobilinogen deaminase (309 aa).

Cysteine 242 carries the post-translational modification S-(dipyrrolylmethanemethyl)cysteine.

The protein belongs to the HMBS family. Monomer. The cofactor is dipyrromethane.

It carries out the reaction 4 porphobilinogen + H2O = hydroxymethylbilane + 4 NH4(+). It participates in porphyrin-containing compound metabolism; protoporphyrin-IX biosynthesis; coproporphyrinogen-III from 5-aminolevulinate: step 2/4. In terms of biological role, tetrapolymerization of the monopyrrole PBG into the hydroxymethylbilane pre-uroporphyrinogen in several discrete steps. The chain is Porphobilinogen deaminase from Shewanella sediminis (strain HAW-EB3).